Here is a 556-residue protein sequence, read N- to C-terminus: 2-succinyl-5-enolpyruvyl-6-hydroxy-3-cyclohexene-1-carboxylate synthase (556 aa).

This sequence belongs to the TPP enzyme family. MenD subfamily. As to quaternary structure, homodimer. Mg(2+) is required as a cofactor. It depends on Mn(2+) as a cofactor. Thiamine diphosphate serves as cofactor.

It catalyses the reaction isochorismate + 2-oxoglutarate + H(+) = 5-enolpyruvoyl-6-hydroxy-2-succinyl-cyclohex-3-ene-1-carboxylate + CO2. It participates in quinol/quinone metabolism; 1,4-dihydroxy-2-naphthoate biosynthesis; 1,4-dihydroxy-2-naphthoate from chorismate: step 2/7. Its pathway is quinol/quinone metabolism; menaquinone biosynthesis. In terms of biological role, catalyzes the thiamine diphosphate-dependent decarboxylation of 2-oxoglutarate and the subsequent addition of the resulting succinic semialdehyde-thiamine pyrophosphate anion to isochorismate to yield 2-succinyl-5-enolpyruvyl-6-hydroxy-3-cyclohexene-1-carboxylate (SEPHCHC). The chain is 2-succinyl-5-enolpyruvyl-6-hydroxy-3-cyclohexene-1-carboxylate synthase from Shigella boydii serotype 4 (strain Sb227).